The primary structure comprises 226 residues: Fibrillarin-like rRNA/tRNA 2'-O-methyltransferase (226 aa).

S-adenosyl-L-methionine contacts are provided by residues 85-86, 104-105, 129-130, and 149-152; these read TT, EF, DA, and DVAQ.

The protein belongs to the methyltransferase superfamily. Fibrillarin family. As to quaternary structure, interacts with nop5. Component of box C/D small ribonucleoprotein (sRNP) particles that contain rpl7ae, FlpA and nop5, plus a guide RNA.

Functionally, involved in pre-rRNA and tRNA processing. Utilizes the methyl donor S-adenosyl-L-methionine to catalyze the site-specific 2'-hydroxyl methylation of ribose moieties in rRNA and tRNA. Site specificity is provided by a guide RNA that base pairs with the substrate. Methylation occurs at a characteristic distance from the sequence involved in base pairing with the guide RNA. The protein is Fibrillarin-like rRNA/tRNA 2'-O-methyltransferase of Thermococcus sibiricus (strain DSM 12597 / MM 739).